We begin with the raw amino-acid sequence, 96 residues long: Co-chaperonin GroES (96 aa).

Belongs to the GroES chaperonin family. Heptamer of 7 subunits arranged in a ring. Interacts with the chaperonin GroEL.

Its subcellular location is the cytoplasm. Its function is as follows. Together with the chaperonin GroEL, plays an essential role in assisting protein folding. The GroEL-GroES system forms a nano-cage that allows encapsulation of the non-native substrate proteins and provides a physical environment optimized to promote and accelerate protein folding. GroES binds to the apical surface of the GroEL ring, thereby capping the opening of the GroEL channel. The protein is Co-chaperonin GroES of Shewanella oneidensis (strain ATCC 700550 / JCM 31522 / CIP 106686 / LMG 19005 / NCIMB 14063 / MR-1).